A 127-amino-acid chain; its full sequence is Small ribosomal subunit protein uS13 (127 aa).

Positions 93-127 (RQGLPVRGQRTRTNGRTRRGRRVTVAGKKKAPAKK) are disordered. The span at 101–127 (QRTRTNGRTRRGRRVTVAGKKKAPAKK) shows a compositional bias: basic residues.

Belongs to the universal ribosomal protein uS13 family. Part of the 30S ribosomal subunit. Forms a loose heterodimer with protein S19. Forms two bridges to the 50S subunit in the 70S ribosome.

Located at the top of the head of the 30S subunit, it contacts several helices of the 16S rRNA. In the 70S ribosome it contacts the 23S rRNA (bridge B1a) and protein L5 of the 50S subunit (bridge B1b), connecting the 2 subunits; these bridges are implicated in subunit movement. Contacts the tRNAs in the A and P-sites. This is Small ribosomal subunit protein uS13 from Crocosphaera subtropica (strain ATCC 51142 / BH68) (Cyanothece sp. (strain ATCC 51142)).